A 137-amino-acid polypeptide reads, in one-letter code: Large ribosomal subunit protein uL16 (137 aa).

Residues 1–17 (MLSPKRVKFRKRQRGRL) are compositionally biased toward basic residues. Residues 1 to 24 (MLSPKRVKFRKRQRGRLKGTDERG) are disordered.

This sequence belongs to the universal ribosomal protein uL16 family. Part of the 50S ribosomal subunit.

In terms of biological role, binds 23S rRNA and is also seen to make contacts with the A and possibly P site tRNAs. This chain is Large ribosomal subunit protein uL16, found in Leptospira borgpetersenii serovar Hardjo-bovis (strain JB197).